Reading from the N-terminus, the 440-residue chain is Glycerol-3-phosphate dehydrogenase [NAD(+)] 2, mitochondrial (440 aa).

The transit peptide at 1-16 directs the protein to the mitochondrion; it reads MLAVRRLTRYTFLKRT. A phosphoserine mark is found at S70, S72, and S75. Residues 90-95, F122, and F178 each bind NAD(+); that span reads GSGNWG. K201 is a binding site for substrate. A234 lines the NAD(+) pocket. Residue K294 is the Proton acceptor of the active site. R359 and Q388 together coordinate NAD(+). Position 359–360 (359–360) interacts with substrate; the sequence is RN.

Belongs to the NAD-dependent glycerol-3-phosphate dehydrogenase family.

Its subcellular location is the cytoplasm. The protein localises to the mitochondrion. The enzyme catalyses sn-glycerol 3-phosphate + NAD(+) = dihydroxyacetone phosphate + NADH + H(+). Catalyzes the production of glycerol under anaerobic growth conditions. Glycerol production serves as a redox sink by consuming the excess cytosolic NADH during anaerobic metabolism. The sequence is that of Glycerol-3-phosphate dehydrogenase [NAD(+)] 2, mitochondrial from Saccharomyces cerevisiae (strain ATCC 204508 / S288c) (Baker's yeast).